The sequence spans 248 residues: Ubiquinone biosynthesis O-methyltransferase (248 aa).

Residues Arg41, Gly72, Asp93, and Met136 each coordinate S-adenosyl-L-methionine.

It belongs to the methyltransferase superfamily. UbiG/COQ3 family.

It carries out the reaction a 3-demethylubiquinol + S-adenosyl-L-methionine = a ubiquinol + S-adenosyl-L-homocysteine + H(+). It catalyses the reaction a 3-(all-trans-polyprenyl)benzene-1,2-diol + S-adenosyl-L-methionine = a 2-methoxy-6-(all-trans-polyprenyl)phenol + S-adenosyl-L-homocysteine + H(+). It participates in cofactor biosynthesis; ubiquinone biosynthesis. O-methyltransferase that catalyzes the 2 O-methylation steps in the ubiquinone biosynthetic pathway. This Bartonella bacilliformis (strain ATCC 35685 / KC583 / Herrer 020/F12,63) protein is Ubiquinone biosynthesis O-methyltransferase.